Consider the following 287-residue polypeptide: Probable glucose uptake protein GlcU (287 aa).

9 helical membrane passes run 7-29 (LIAL…VGGG), 34-56 (IRGT…HAAF), 58-75 (NLTV…WAFG), 114-136 (WSTI…GISL), 156-178 (MGIL…IFGV), 183-202 (ALFF…SMNH), 209-228 (TALN…FMFY), 233-255 (VGVA…GGIF), and 267-286 (IGIW…LGNL).

It belongs to the GRP transporter (TC 2.A.7.5) family.

It is found in the cell membrane. Involved in the uptake of glucose. The sequence is that of Probable glucose uptake protein GlcU (glcU) from Staphylococcus epidermidis (strain ATCC 35984 / DSM 28319 / BCRC 17069 / CCUG 31568 / BM 3577 / RP62A).